Reading from the N-terminus, the 2542-residue chain is Talin-2 (2542 aa).

Positions 88 to 406 (RPQKIRMLDG…GYIDIILKKK (319 aa)) constitute an FERM domain. The segment at 312–406 (GVSFFLVKEK…GYIDIILKKK (95 aa)) is interaction with PIP5K1C. Phosphoserine occurs at positions 428, 449, 623, and 1023. Tyr-1665 carries the post-translational modification Phosphotyrosine. Thr-1843 carries the post-translational modification Phosphothreonine. In terms of domain architecture, I/LWEQ spans 2294–2533 (TEWVDPEDPT…QIRQQQYKFL (240 aa)).

Interacts directly with PIP5K1C.

Its subcellular location is the cytoplasm. It localises to the cell junction. The protein resides in the focal adhesion. It is found in the synapse. The protein localises to the cell membrane. Its subcellular location is the cytoskeleton. In terms of biological role, as a major component of focal adhesion plaques that links integrin to the actin cytoskeleton, may play an important role in cell adhesion. Recruits PIP5K1C to focal adhesion plaques and strongly activates its kinase activity. This chain is Talin-2 (TLN2), found in Homo sapiens (Human).